A 406-amino-acid polypeptide reads, in one-letter code: 4-hydroxy-3-methylbut-2-en-1-yl diphosphate synthase (flavodoxin) (406 aa).

[4Fe-4S] cluster is bound by residues C297, C300, C343, and E350.

The protein belongs to the IspG family. The cofactor is [4Fe-4S] cluster.

The catalysed reaction is (2E)-4-hydroxy-3-methylbut-2-enyl diphosphate + oxidized [flavodoxin] + H2O + 2 H(+) = 2-C-methyl-D-erythritol 2,4-cyclic diphosphate + reduced [flavodoxin]. It functions in the pathway isoprenoid biosynthesis; isopentenyl diphosphate biosynthesis via DXP pathway; isopentenyl diphosphate from 1-deoxy-D-xylulose 5-phosphate: step 5/6. Functionally, converts 2C-methyl-D-erythritol 2,4-cyclodiphosphate (ME-2,4cPP) into 1-hydroxy-2-methyl-2-(E)-butenyl 4-diphosphate. This is 4-hydroxy-3-methylbut-2-en-1-yl diphosphate synthase (flavodoxin) from Thermus thermophilus (strain ATCC 27634 / DSM 579 / HB8).